We begin with the raw amino-acid sequence, 301 residues long: Nodulation protein D 3 (301 aa).

The HTH lysR-type domain maps to 6–63 (LDLNLLVVLDALLTARNLTAAASSINLSQPAMSAAVARLRNYFNDELFTMSGRERVLT). The segment at residues 23–43 (LTAAASSINLSQPAMSAAVAR) is a DNA-binding region (H-T-H motif).

The protein belongs to the LysR transcriptional regulatory family.

NodD regulates the expression of the nodABCFE genes which encode other nodulation proteins. NodD is also a negative regulator of its own expression. Binds flavonoids as inducers. The polypeptide is Nodulation protein D 3 (nodD3) (Mesorhizobium japonicum (strain LMG 29417 / CECT 9101 / MAFF 303099) (Mesorhizobium loti (strain MAFF 303099))).